Consider the following 68-residue polypeptide: Putative membrane protein insertion efficiency factor (68 aa).

The protein belongs to the UPF0161 family.

Its subcellular location is the cell membrane. Its function is as follows. Could be involved in insertion of integral membrane proteins into the membrane. The sequence is that of Putative membrane protein insertion efficiency factor from Herpetosiphon aurantiacus (strain ATCC 23779 / DSM 785 / 114-95).